The sequence spans 92 residues: Small ribosomal subunit protein uS19c (92 aa).

Belongs to the universal ribosomal protein uS19 family.

The protein resides in the plastid. Its subcellular location is the chloroplast. Protein S19 forms a complex with S13 that binds strongly to the 16S ribosomal RNA. In Cicer arietinum (Chickpea), this protein is Small ribosomal subunit protein uS19c.